The following is a 1568-amino-acid chain: Myosin-2 (1568 aa).

A Myosin N-terminal SH3-like domain is found at 4 to 57; it reads EVGTRCWYPHKELGWIGAEVIKNEVKDGKYHLELSLEDDEVVSVDTEDLNDDKN. The Myosin motor domain maps to 70–783; it reads EATEDLTSLS…MLAYLEKLRS (714 aa). 164–171 provides a ligand contact to ATP; sequence GESGAGKT. The interval 443–523 is actin-binding; sequence FIGVLDIYGF…LGILSLLDEE (81 aa). The disordered stretch occupies residues 619-641; sequence KKAELEQNNPGNKKPGPARTVNR. IQ domains are found at residues 786–808, 809–833, 834–856, 857–881, 882–904, and 905–934; these read MHNS…QYLK, ISQA…YHEM, KVHS…NVFN, VLIT…KREH, EYNA…TFLN, and TKRD…DAKS. Residues 944 to 1088 adopt a coiled-coil conformation; it reads KLENKVIELT…ISRLQTAMSL (145 aa). Positions 1089–1568 are non alpha-helical, tail domain; it reads GTVTTSVLPQ…VAQQVVQDGH (480 aa). Residues 1223 to 1498 form the Dilute domain; sequence AQVLTTIQKV…LRYVADIVKK (276 aa).

The protein belongs to the TRAFAC class myosin-kinesin ATPase superfamily. Myosin family. As to quaternary structure, homodimer. Interacts with calmodulin (CMD1) and the myosin light chain MLC1 through its IQ repeats.

Functionally, myosin heavy chain that is required for the cell cycle-regulated transport of various organelles and proteins for their segregation. Functions by binding with its tail domain to receptor proteins on organelles and exerting force with its N-terminal motor domain against actin filaments, thereby transporting its cargo along polarized actin cables. This is Myosin-2 (MYO2) from Saccharomyces uvarum (strain ATCC 76518 / CBS 7001 / CLIB 283 / NBRC 10550 / MCYC 623 / NCYC 2669 / NRRL Y-11845) (Yeast).